Consider the following 694-residue polypeptide: Beta-galactosidase (694 aa).

The interval 1-31 (MGKRFPSGWFSPRVHPPRRQRSPMTNQATPG) is disordered. Over residues 22-31 (SPMTNQATPG) the composition is skewed to polar residues. Residues R144 and N182 each contribute to the substrate site. Residue E183 is the Proton donor of the active site. The active-site Nucleophile is the E341. Residues W349 and 389–392 (EKFH) each bind substrate.

Belongs to the glycosyl hydrolase 42 family. Homotrimer.

The enzyme catalyses Hydrolysis of terminal non-reducing beta-D-galactose residues in beta-D-galactosides.. Strongly inhibited by glucose. No activity is lost during treatment with 100 mM EDTA after 2 hours. Activity not considerably affected by metal ions (5 mM), including Na(+), K(+), Mg(2+), Co(2+) and Ca(2+). Completely inhibited by Cu(2+) and Zn(2+) (5 mM) and is strongly inhibited by Mn(2+) (11%), Fe(2+) (25%) and Ni(2+) (38%) in comparison with the activity in the absence of cations (100%). Activity not affected by dithiothreitol, beta-mercaptoethanol and L-cysteine whereas reduced glutathione almost completely inactivates it. With ONPG as substrate, the addition of ethanol up to 20% still slightly stimulates activity. The activity increases up to 120% in the presence of 8% v/v ethanol at pH 5.5. In terms of biological role, hydrolyzes p-nitrophenyl-beta-D-galactopyranoside (PNPG), o-nitrophenyl-beta-D-galactopyranoside (ONPG) and chromogen 5-bromo-4-chloro-3-indolyl-beta-D-galactopyranoside (X-gal), with highest activity against PNPG. Also acts on p-nitrophenyl-beta-D-glucopyranoside (PNPGlu) and o-nitrophenyl-beta-D-glucopyranoside (ONPGlu), but with significantly lower activity. This is Beta-galactosidase from Arthrobacter sp.